Reading from the N-terminus, the 601-residue chain is Cdc42-interacting protein 4 (601 aa).

A required for podosome formation and interaction with AKAP9 and microtubules region spans residues 1–117; it reads MDWGTELWDQ…EMKQERKMHF (117 aa). A required for translocation to the plasma membrane in response to insulin region spans residues 1–117; it reads MDWGTELWDQ…EMKQERKMHF (117 aa). The 264-residue stretch at 1 to 264 folds into the F-BAR domain; the sequence is MDWGTELWDQ…AANAVDPKND (264 aa). A coiled-coil region spans residues 67 to 259; that stretch reads FSQQQSFVQI…EGMKVAANAV (193 aa). Disordered regions lie at residues 280–358, 390–420, and 479–543; these read GDVE…GRDP, DFSH…EVDQ, and RGDS…SPIG. A compositionally biased stretch (polar residues) spans 289 to 302; it reads QPMNRAPSDSSLGT. Positions 293 to 537 are interaction with CDC42; it reads RAPSDSSLGT…TEFDEDFEEE (245 aa). Residues 293–601 are interaction with PDE6G; that stretch reads RAPSDSSLGT…PTSYLRVTLN (309 aa). A phosphoserine mark is found at Ser296, Ser298, and Ser299. Over residues 314–329 the composition is skewed to basic residues; the sequence is GRSRTKRWPFGKKNKP. The residue at position 335 (Ser335) is a Phosphoserine. Low complexity predominate over residues 336-346; that stretch reads PLGGPVPSALP. Ser351 is modified (phosphoserine). Residues 388-481 adopt a coiled-coil conformation; the sequence is TEDFSHLPPE…ESRVLSNRGD (94 aa). An REM-1 domain is found at 393-470; the sequence is HLPPEQQRKR…VQKYEAWLAE (78 aa). The segment covering 407–420 has biased composition (basic and acidic residues); sequence LEERSRELQKEVDQ. The tract at residues 471–601 is required for interaction with FASLG and localization to lysosomes; that stretch reads AESRVLSNRG…PTSYLRVTLN (131 aa). Ser482 bears the Phosphoserine mark. The tract at residues 487 to 541 is interaction with DNM2 and WASL; it reads ARPPDPPASAPPDSSSNSASQDTKESSEEPPSEESQDTPIYTEFDEDFEEEPTSP. Over residues 497 to 506 the composition is skewed to low complexity; sequence PPDSSSNSAS. A compositionally biased stretch (acidic residues) spans 529–538; that stretch reads EFDEDFEEEP. The interval 529–601 is interaction with DNM1 and WASL; the sequence is EFDEDFEEEP…PTSYLRVTLN (73 aa). The interval 538–601 is required for podosome formation; that stretch reads PTSPIGHCVA…PTSYLRVTLN (64 aa). The 62-residue stretch at 540–601 folds into the SH3 domain; that stretch reads SPIGHCVAIY…PTSYLRVTLN (62 aa). The tract at residues 544–601 is interaction with WAS; that stretch reads HCVAIYHFEGSSEGTISMAEGEDLSLMEEDKGDGWTRVRRKEGGEGYVPTSYLRVTLN. The interval 546–601 is interaction with ARHGAP17, DAAM1, DIAPH1 and DIAPH2; it reads VAIYHFEGSSEGTISMAEGEDLSLMEEDKGDGWTRVRRKEGGEGYVPTSYLRVTLN.

It belongs to the FNBP1 family. In terms of assembly, interacts specifically with GTP-bound RHOQ. Interacts with DNM2 and PDE6G. Homodimerizes, the dimers can polymerize end-to-end to form filamentous structures. Interacts specifically with GTP-bound CDC42. Interacts with AKAP9, ARHGAP17, DAAM1, DIAPH1, DIAPH2, DNM1, FASLG/FASL, GAPVD1, LYN, microtubules, SRC, WAS/WASP and WASL/N-WASP. Interacts with the ligand binding domain of the thyroid receptor (TR) in the presence of thyroid hormone. May interact with CTNNB1 and HD/HTT. In terms of processing, tyrosine phosphorylated. Also phosphorylated by PKA. In terms of tissue distribution, expressed in brain, colon, heart, kidney, liver, lung, megakaryocyte, ovary, pancreas, peripheral blood lymphocytes, placenta, prostate, skeletal muscle, small intestine, spleen, testis, thymus and trachea.

The protein localises to the cytoplasm. Its subcellular location is the cytoskeleton. It is found in the cell cortex. It localises to the lysosome. The protein resides in the golgi apparatus. The protein localises to the cell membrane. Its subcellular location is the cell projection. It is found in the phagocytic cup. It localises to the perinuclear region. Required for translocation of GLUT4 to the plasma membrane in response to insulin signaling. Required to coordinate membrane tubulation with reorganization of the actin cytoskeleton during endocytosis. Binds to lipids such as phosphatidylinositol 4,5-bisphosphate and phosphatidylserine and promotes membrane invagination and the formation of tubules. Also promotes CDC42-induced actin polymerization by recruiting WASL/N-WASP which in turn activates the Arp2/3 complex. Actin polymerization may promote the fission of membrane tubules to form endocytic vesicles. Required for the formation of podosomes, actin-rich adhesion structures specific to monocyte-derived cells. May be required for the lysosomal retention of FASLG/FASL. This chain is Cdc42-interacting protein 4 (TRIP10), found in Homo sapiens (Human).